The following is a 185-amino-acid chain: Avirulence protein ATR39-1 (185 aa).

A signal peptide spans methionine 1–alanine 20. The RxLR-dEER motif lies at arginine 49 to arginine 66.

This sequence belongs to the RxLR effector family.

It is found in the secreted. It localises to the host cell. Functionally, secreted effector that acts as an elicitor of hypersensitive response (HR) specifically on plants carrying defense protein RPP39. The allele ATR39-1 is recognized by RPP39, whereas the ATR39-2 allele is not recognized. The protein is Avirulence protein ATR39-1 of Hyaloperonospora arabidopsidis (strain Emoy2) (Downy mildew agent).